A 160-amino-acid chain; its full sequence is Lipoprotein signal peptidase (160 aa).

2 helical membrane passes run 59–79 and 84–104; these read PEGI…YVWI and SPLF…NLID. Residues D113 and D139 contribute to the active site. A helical transmembrane segment spans residues 132–152; sequence WPIFNIADACITIGACLLFFF.

The protein belongs to the peptidase A8 family.

It localises to the cell inner membrane. The enzyme catalyses Release of signal peptides from bacterial membrane prolipoproteins. Hydrolyzes -Xaa-Yaa-Zaa-|-(S,diacylglyceryl)Cys-, in which Xaa is hydrophobic (preferably Leu), and Yaa (Ala or Ser) and Zaa (Gly or Ala) have small, neutral side chains.. It functions in the pathway protein modification; lipoprotein biosynthesis (signal peptide cleavage). Its function is as follows. This protein specifically catalyzes the removal of signal peptides from prolipoproteins. This Chlorobaculum parvum (strain DSM 263 / NCIMB 8327) (Chlorobium vibrioforme subsp. thiosulfatophilum) protein is Lipoprotein signal peptidase.